The following is a 270-amino-acid chain: Formamidopyrimidine-DNA glycosylase (270 aa).

Residue Pro2 is the Schiff-base intermediate with DNA of the active site. Catalysis depends on Glu3, which acts as the Proton donor. Lys58 serves as the catalytic Proton donor; for beta-elimination activity. The DNA site is built by His90, Arg109, and Arg152. An FPG-type zinc finger spans residues 237–270 (RVYGREGEACECGGAIVRVVQSGRSTFYCRKCQR). Residue Arg260 is the Proton donor; for delta-elimination activity of the active site.

This sequence belongs to the FPG family. In terms of assembly, monomer. Zn(2+) serves as cofactor.

It carries out the reaction Hydrolysis of DNA containing ring-opened 7-methylguanine residues, releasing 2,6-diamino-4-hydroxy-5-(N-methyl)formamidopyrimidine.. The enzyme catalyses 2'-deoxyribonucleotide-(2'-deoxyribose 5'-phosphate)-2'-deoxyribonucleotide-DNA = a 3'-end 2'-deoxyribonucleotide-(2,3-dehydro-2,3-deoxyribose 5'-phosphate)-DNA + a 5'-end 5'-phospho-2'-deoxyribonucleoside-DNA + H(+). Its function is as follows. Involved in base excision repair of DNA damaged by oxidation or by mutagenic agents. Acts as a DNA glycosylase that recognizes and removes damaged bases. Has a preference for oxidized purines, such as 7,8-dihydro-8-oxoguanine (8-oxoG). Has AP (apurinic/apyrimidinic) lyase activity and introduces nicks in the DNA strand. Cleaves the DNA backbone by beta-delta elimination to generate a single-strand break at the site of the removed base with both 3'- and 5'-phosphates. The polypeptide is Formamidopyrimidine-DNA glycosylase (Sphingopyxis alaskensis (strain DSM 13593 / LMG 18877 / RB2256) (Sphingomonas alaskensis)).